The primary structure comprises 309 residues: Olfactory receptor 14A16 (309 aa).

The Extracellular segment spans residues 1–23; that stretch reads MANLTIVTEFILMGFSTNKNMCI. Asparagine 3 is a glycosylation site (N-linked (GlcNAc...) asparagine). A helical membrane pass occupies residues 24–44; the sequence is LHSILFLLIYLCALMGNVLII. The Cytoplasmic portion of the chain corresponds to 45–52; the sequence is MITTLDHH. A helical transmembrane segment spans residues 53 to 73; it reads LHTPVYFFLKNLSFLDLCLIS. The Extracellular portion of the chain corresponds to 74-97; the sequence is VTAPKSIANSLIHNNSISFLGCVS. Asparagine 87 carries an N-linked (GlcNAc...) asparagine glycan. Residues cysteine 95 and cysteine 187 are joined by a disulfide bond. The helical transmembrane segment at 98-118 threads the bilayer; sequence QVFLLLSSASAELLLLTVMSF. Residues 119-131 lie on the Cytoplasmic side of the membrane; sequence DRYTAICHPLHYD. The helical transmembrane segment at 132 to 152 threads the bilayer; it reads VIMDRSTCVQRATVSWLYGGL. The Extracellular portion of the chain corresponds to 153 to 194; the sequence is IAVMHTAGTFSLSYCGSNMVHQFFCDIPQLLAISCSENLIRE. The chain crosses the membrane as a helical span at residues 195-215; the sequence is IALILINVVLDFCCFIVIIIT. Topologically, residues 216–235 are cytoplasmic; that stretch reads YVHVFSTVKKIPSTEGQSKA. The chain crosses the membrane as a helical span at residues 236–255; the sequence is YSICLPHLLVVLFLSTGFIA. The Extracellular segment spans residues 256 to 268; sequence YLKPASESPSILD. A helical membrane pass occupies residues 269–289; it reads AVISVFYTMLPPTFNPIIYSL. Over 290 to 309 the chain is Cytoplasmic; sequence RNKAIKVALGMLIKGKLTKK.

Belongs to the G-protein coupled receptor 1 family.

It localises to the cell membrane. Its function is as follows. Odorant receptor. The polypeptide is Olfactory receptor 14A16 (OR14A16) (Homo sapiens (Human)).